Here is a 235-residue protein sequence, read N- to C-terminus: Large ribosomal subunit protein uL1 (235 aa).

This sequence belongs to the universal ribosomal protein uL1 family. Part of the 50S ribosomal subunit.

In terms of biological role, binds directly to 23S rRNA. The L1 stalk is quite mobile in the ribosome, and is involved in E site tRNA release. Its function is as follows. Protein L1 is also a translational repressor protein, it controls the translation of the L11 operon by binding to its mRNA. This is Large ribosomal subunit protein uL1 from Prochlorococcus marinus (strain MIT 9515).